We begin with the raw amino-acid sequence, 215 residues long: Pyrrolidone-carboxylate peptidase (215 aa).

Catalysis depends on residues Glu-80, Cys-143, and His-167.

This sequence belongs to the peptidase C15 family. As to quaternary structure, homotetramer.

It is found in the cytoplasm. It catalyses the reaction Release of an N-terminal pyroglutamyl group from a polypeptide, the second amino acid generally not being Pro.. Functionally, removes 5-oxoproline from various penultimate amino acid residues except L-proline. This Yersinia pseudotuberculosis serotype O:3 (strain YPIII) protein is Pyrrolidone-carboxylate peptidase.